A 67-amino-acid chain; its full sequence is Coiled-coil domain-containing protein 179 (67 aa).

2 disordered regions span residues 1–32 (MCLRVKDEEPAQVYPEGPRRHHPSDVSTRQSV) and 47–67 (RKLGKRFARPNPIPDTGILWT). The stretch at 27 to 53 (STRQSVEKRINYMQNLQKEKRKLGKRF) forms a coiled coil.

This Mus musculus (Mouse) protein is Coiled-coil domain-containing protein 179 (Ccdc179).